The sequence spans 355 residues: Peptide chain release factor 1 (355 aa).

N5-methylglutamine is present on Gln-231.

This sequence belongs to the prokaryotic/mitochondrial release factor family. Methylated by PrmC. Methylation increases the termination efficiency of RF1.

Its subcellular location is the cytoplasm. In terms of biological role, peptide chain release factor 1 directs the termination of translation in response to the peptide chain termination codons UAG and UAA. In Wolinella succinogenes (strain ATCC 29543 / DSM 1740 / CCUG 13145 / JCM 31913 / LMG 7466 / NCTC 11488 / FDC 602W) (Vibrio succinogenes), this protein is Peptide chain release factor 1.